We begin with the raw amino-acid sequence, 115 residues long: Large ribosomal subunit protein uL18 (115 aa).

The disordered stretch occupies residues 1-20 (MKYTKQEARKRRHYRVRSKV). Residues 8–18 (ARKRRHYRVRS) are compositionally biased toward basic residues.

It belongs to the universal ribosomal protein uL18 family. As to quaternary structure, part of the 50S ribosomal subunit; part of the 5S rRNA/L5/L18/L25 subcomplex. Contacts the 5S and 23S rRNAs.

Its function is as follows. This is one of the proteins that bind and probably mediate the attachment of the 5S RNA into the large ribosomal subunit, where it forms part of the central protuberance. The sequence is that of Large ribosomal subunit protein uL18 from Mesoplasma florum (strain ATCC 33453 / NBRC 100688 / NCTC 11704 / L1) (Acholeplasma florum).